A 695-amino-acid chain; its full sequence is Hypersensitivity response secretion protein HrpI (695 aa).

The next 7 membrane-spanning stretches (helical) occupy residues 21-38 (LVGAFFVIAIVFMMITPL), 45-61 (VLIAVNICISCLLIMLA), 68-92 (LAFSTFPAVLLLTTMFRLALSVSTT), 111-135 (FVVGGNLAVGLVIFLILTVVNFLVI), 203-223 (AIASLIIVAINMIGGISIGVL), 244-262 (GLIAQIPALLISVTSGMII), and 311-327 (VFITIAIICGAGGLLQL).

The protein belongs to the FHIPEP (flagella/HR/invasion proteins export pore) family.

Its subcellular location is the cell inner membrane. Functionally, involved in the secretion of harpin-pss; a proteinaceous elicitor of the hypersensitivity response in plants. This Pseudomonas syringae pv. syringae protein is Hypersensitivity response secretion protein HrpI (hrpI).